We begin with the raw amino-acid sequence, 84 residues long: Exodeoxyribonuclease 7 small subunit (84 aa).

Belongs to the XseB family. Heterooligomer composed of large and small subunits.

Its subcellular location is the cytoplasm. It catalyses the reaction Exonucleolytic cleavage in either 5'- to 3'- or 3'- to 5'-direction to yield nucleoside 5'-phosphates.. Functionally, bidirectionally degrades single-stranded DNA into large acid-insoluble oligonucleotides, which are then degraded further into small acid-soluble oligonucleotides. The protein is Exodeoxyribonuclease 7 small subunit of Bartonella henselae (strain ATCC 49882 / DSM 28221 / CCUG 30454 / Houston 1) (Rochalimaea henselae).